The chain runs to 1119 residues: DNA-directed RNA polymerase subunit beta (1119 aa).

Belongs to the RNA polymerase beta chain family. As to quaternary structure, the RNAP catalytic core consists of 2 alpha, 1 beta, 1 beta' and 1 omega subunit. When a sigma factor is associated with the core the holoenzyme is formed, which can initiate transcription.

The catalysed reaction is RNA(n) + a ribonucleoside 5'-triphosphate = RNA(n+1) + diphosphate. Its function is as follows. DNA-dependent RNA polymerase catalyzes the transcription of DNA into RNA using the four ribonucleoside triphosphates as substrates. In Thermus thermophilus (strain ATCC BAA-163 / DSM 7039 / HB27), this protein is DNA-directed RNA polymerase subunit beta.